A 786-amino-acid polypeptide reads, in one-letter code: Endonuclease MutS2 (786 aa).

333–340 (GPNTGGKT) contacts ATP. Positions 682–709 (EKIKPSKQSAAQRPVVKVSGGGMSGPST) are disordered. The Smr domain occupies 711–786 (LDLRGERYDQ…GSGATIVNFK (76 aa)).

Belongs to the DNA mismatch repair MutS family. MutS2 subfamily. As to quaternary structure, homodimer. Binds to stalled ribosomes, contacting rRNA.

In terms of biological role, endonuclease that is involved in the suppression of homologous recombination and thus may have a key role in the control of bacterial genetic diversity. Its function is as follows. Acts as a ribosome collision sensor, splitting the ribosome into its 2 subunits. Detects stalled/collided 70S ribosomes which it binds and splits by an ATP-hydrolysis driven conformational change. Acts upstream of the ribosome quality control system (RQC), a ribosome-associated complex that mediates the extraction of incompletely synthesized nascent chains from stalled ribosomes and their subsequent degradation. Probably generates substrates for RQC. This Lacticaseibacillus casei (strain BL23) (Lactobacillus casei) protein is Endonuclease MutS2.